Consider the following 354-residue polypeptide: Erythroferrone (354 aa).

The first 28 residues, 1–28, serve as a signal peptide directing secretion; it reads MAPARRPAGARLLLVYAGLLAAAAAGLG. Composition is skewed to low complexity over residues 26–37 and 51–62; these read GLGSPEPGAPSR and PRGPGESRAGPA. Positions 26–123 are disordered; that stretch reads GLGSPEPGAP…PGPPGPQGPP (98 aa). Over residues 69–80 the composition is skewed to basic and acidic residues; the sequence is TAERAHSVDPRD. The span at 94 to 107 shows a compositional bias: basic residues; it reads NGKKRSRGKAKKLK. Hydroxyproline is present on residues Pro-111, Pro-113, Pro-114, Pro-116, Pro-117, and Pro-119. Positions 111–123 are enriched in pro residues; it reads PGPPGPPGPQGPP. The 156-residue stretch at 199–354 folds into the C1q domain; sequence APRVEAAFLC…SHFSAVLLGV (156 aa). Asn-243, Asn-295, and Asn-333 each carry an N-linked (GlcNAc...) asparagine glycan.

It belongs to the adipolin/erythroferrone family. Homodimer; disulfide-linked. Forms trimer, hexamers and higher molecular weight oligomers. May form heteromeric complexes with C1QTNF2 and C1QTNF12 and, to a lesser extent, with C1QTNF5 and C1QTNF10. Interacts with BMP5 and BMP7; the interaction inhibits BMP-induced transcription of HAMP. Interacts with BMP6; the interaction inhibits BMP-induced transcription of HAMP. Interacts with BMP2. Interacts with heterodimers composed of BMP2 and BMP6 in vitro, the interaction inhibits the heterodimer binding to its receptor BMPR1A /ALK3 and thereby suppresses expression of HAMP. Post-translationally, N-glycosylated; required for secretion of the mature protein.

It localises to the secreted. Functionally, iron-regulatory hormone that acts as an erythroid regulator after hemorrhage: produced by erythroblasts following blood loss and mediates suppression of hepcidin (HAMP) expression in the liver, thereby promoting increased iron absorption and mobilization from stores. Promotes lipid uptake into adipocytes and hepatocytes via transcriptional up-regulation of genes involved in fatty acid uptake. Inhibits apoptosis and inflammatory response in cardiomyocytes via promotion of sphingosine-1-phosphate (S1P) and cAMP-dependent activation of AKT signaling. Inhibits autophagy induced by nutrient deficiency in hepatocytes via promoting the phosphorylation of IRS1, AKT, and MTOR, and thereby subsequent activation of the AKT-MTOR signaling pathway. Negatively regulates the differentiation of osteoblasts, potentially via sequestering BMP2, and thereby inhibits the activation of SMAD signaling. The reduction in BMP2 signaling in osteoblasts also results in an increase in expression of the osteoclastogenesis-promoting factors TNFSF11/RANKL and SOST, thereby indirectly promotes bone resorption. This is Erythroferrone from Homo sapiens (Human).